A 132-amino-acid polypeptide reads, in one-letter code: Holo-[acyl-carrier-protein] synthase (132 aa).

D8 and E64 together coordinate Mg(2+).

This sequence belongs to the P-Pant transferase superfamily. AcpS family. The cofactor is Mg(2+).

The protein localises to the cytoplasm. The catalysed reaction is apo-[ACP] + CoA = holo-[ACP] + adenosine 3',5'-bisphosphate + H(+). Functionally, transfers the 4'-phosphopantetheine moiety from coenzyme A to a Ser of acyl-carrier-protein. The sequence is that of Holo-[acyl-carrier-protein] synthase from Shewanella sediminis (strain HAW-EB3).